The chain runs to 277 residues: Homeobox protein Nkx-6.2 (277 aa).

A repressor domain region spans residues 89 to 142 (AGVYFGPAAAVARGYPKPLAELPGRPPIFWPGVVQGAPWRDPRLAGPAPAGGVL). 2 disordered regions span residues 132–155 (LAGP…RPTF) and 210–250 (EMAS…DDEK). The segment at residues 148 to 207 (KKHSRPTFSGQQIFALEKTFEQTKYLAGPERARLAYSLGMTESQVKVWFQNRRTKWRKRH) is a DNA-binding region (homeobox). Basic and acidic residues predominate over residues 216-226 (KKQDSDAEKLK).

Highest expression in brain.

The protein resides in the nucleus. In terms of biological role, transcription factor with repressor activity involved in the regulation of axon-glial interactions at myelin paranodes in oligodendrocytes. Binds to the consensus DNA sequence 5'-(A/T)TTAATGA-3'. In oligodendrocytes, binds to MBP and PLP1 promoter regions. The protein is Homeobox protein Nkx-6.2 (NKX6-2) of Homo sapiens (Human).